Reading from the N-terminus, the 534-residue chain is Replication factor C large subunit (534 aa).

45 to 52 contributes to the ATP binding site; the sequence is GPPGIGKT. Over residues 444–463 the composition is skewed to basic and acidic residues; sequence KNKKEIKVKTKKDTVEDSSK. Residues 444–534 are disordered; that stretch reads KNKKEIKVKT…KSRQTTLFDF (91 aa). Low complexity predominate over residues 488 to 510; sequence SSNSTTKNKTESPKNSSKTSSKT. Residues 517–527 show a composition bias toward basic residues; it reads TSKKNNKKKSR.

The protein belongs to the activator 1 small subunits family. RfcL subfamily. Heteromultimer composed of small subunits (RfcS) and large subunits (RfcL).

Functionally, part of the RFC clamp loader complex which loads the PCNA sliding clamp onto DNA. The chain is Replication factor C large subunit from Methanosphaera stadtmanae (strain ATCC 43021 / DSM 3091 / JCM 11832 / MCB-3).